Here is an 812-residue protein sequence, read N- to C-terminus: Zn(2)-C6 fungal-type transcription factor pigI (812 aa).

The segment at 42-74 (GCLHPRSPPRDRTAMADNSNSSPPASRRREKPQ) is disordered. Positions 77 to 105 (CTLCRRRKLRCDRRQPCETCVRRGLSLSC) form a DNA-binding region, zn(2)-C6 fungal-type.

The protein resides in the nucleus. In terms of biological role, zn(2)-C6 fungal-type transcription factor; part of the gene cluster that mediates the biosynthesis of azaphilone pigments (MonAzPs), a complex mixture of compounds with a common azaphilone skeleton very widely used as food colorants. Acts probably as a negative regulator of the azaphilone pigments (MonAzPs) gene cluster. The chain is Zn(2)-C6 fungal-type transcription factor pigI from Monascus ruber (Mold).